A 357-amino-acid polypeptide reads, in one-letter code: Heat-inducible transcription repressor HrcA (357 aa).

Belongs to the HrcA family.

Its function is as follows. Negative regulator of class I heat shock genes (grpE-dnaK-dnaJ and groELS operons). Prevents heat-shock induction of these operons. This chain is Heat-inducible transcription repressor HrcA, found in Chlorobium limicola (strain DSM 245 / NBRC 103803 / 6330).